Consider the following 1692-residue polypeptide: Adenylate cyclase (1692 aa).

Disordered regions lie at residues 1-22 (MDQSKRLLKSAVPNPPEHFKTG) and 103-142 (SLSDTGRTKSDTALAARESSEKSEVPRDTRSAGIKPYKEN). Over residues 120–132 (ESSEKSEVPRDTR) the composition is skewed to basic and acidic residues. Residues 174–195 (FTNLTFPEPISDDSDSVEFQRD) are required for interaction with gpa2. The 89-residue stretch at 292 to 380 (KEFFLRVYRD…SDEEINEEDN (89 aa)) folds into the Ras-associating domain. 21 LRR repeats span residues 430 to 450 (ELISLNVSHNLSLDLPLDFME), 454 to 474 (KLKRLDISNNLRSPRGKPITA), 477 to 498 (QLEVLNMSRNDIYELDPLIFSG), 503 to 524 (SLKELNIANNKLFFLPHSTRYL), 526 to 547 (NLTYLDLSYNNFVTFPLIITEL), 549 to 570 (QLETLNFSHNLLSQISSKIGSL), 572 to 594 (KLKHLYLQFNDLSNRLPQEIGLL), 596 to 617 (NLETIDLSYNAITNIASLSECP), 618 to 639 (KLNSINVACNLLSFYEYSNPSA), 660 to 681 (NLVYFDISHAKLIGLKDSVIET), 684 to 705 (NVETVKVNYNHFTSISDAISAM), 707 to 729 (NLKYLSCTNCEMSYVSPNLGKLK), 730 to 751 (HLVHLDLHANNIKIFPEEVWQV), 753 to 774 (SLKVVNLSSNILEKIKLPVATS), 783 to 805 (QLKIMRTLSGNPVSSLSSQEFVM), 807 to 827 (TVEELYLVDNRLGNDCFTALE), 831 to 852 (CLKVLNLSYNYLTEIPSKFFQN), 855 to 876 (DLKHLFVSGNELANLSISSTAQ), 878 to 899 (LLETLYANGNRLSSFPKNEALS), 901 to 922 (SLRFLDISTNNLQNLAVEKAEK), and 930 to 951 (QLEYLNLSGNTWFRFSEHEDTN). The 281-residue stretch at 995–1275 (RYGVCGYLSR…KNVLVVIVEL (281 aa)) folds into the PPM-type phosphatase domain. In terms of domain architecture, Guanylate cyclase spans 1332-1469 (AMVFTDIKNS…PVVNRTSRVV (138 aa)). Mg(2+) is bound by residues Asp-1337 and Asp-1380. Mn(2+)-binding residues include Asp-1337 and Asp-1380. Residues 1585 to 1597 (SDSKSVHGEEGGS) show a composition bias toward basic and acidic residues. The disordered stretch occupies residues 1585–1614 (SDSKSVHGEEGGSGKRSVSSLRNVSPSEST). The segment covering 1600–1614 (RSVSSLRNVSPSEST) has biased composition (polar residues).

It belongs to the adenylyl cyclase class-3 family. As to quaternary structure, interacts (via N-terminus) with gpa2; the interaction is direct and serves to activate adenylate cyclase and cAMP-PKA signaling, to repress sexual development and gluconeogenesis. Interacts with git1. Mn(2+) is required as a cofactor.

Its subcellular location is the cytoplasm. The catalysed reaction is ATP = 3',5'-cyclic AMP + diphosphate. Activated by binding G protein gpa2. Activated by git1. In contrast to yeast cyclase, S.pombe cyclase is not likely to be regulated by RAS proteins. Acts in glucose-induced cAMP signaling by catalyzing the synthesis of the second messenger, cAMP to activate PKA signaling and repress sexual development and gluconeogenesis. In Schizosaccharomyces pombe (strain 972 / ATCC 24843) (Fission yeast), this protein is Adenylate cyclase.